The sequence spans 304 residues: N-acetyl-D-glucosamine kinase (304 aa).

ATP contacts are provided by residues 4–11 and 133–140; these read GLDIGGTK and GFGGGFVL. Zn(2+) contacts are provided by histidine 157, cysteine 178, cysteine 180, and cysteine 185.

This sequence belongs to the ROK (NagC/XylR) family. NagK subfamily.

It catalyses the reaction N-acetyl-D-glucosamine + ATP = N-acetyl-D-glucosamine 6-phosphate + ADP + H(+). It participates in cell wall biogenesis; peptidoglycan recycling. Its function is as follows. Catalyzes the phosphorylation of N-acetyl-D-glucosamine (GlcNAc) derived from cell-wall degradation, yielding GlcNAc-6-P. This chain is N-acetyl-D-glucosamine kinase, found in Haemophilus influenzae (strain 86-028NP).